A 163-amino-acid polypeptide reads, in one-letter code: Phosphopantetheine adenylyltransferase (163 aa).

A substrate-binding site is contributed by Thr10. Residues 10–11 (TF) and His18 each bind ATP. Substrate is bound by residues Lys42, Leu74, and Arg88. ATP is bound by residues 89 to 91 (GLR), Glu99, and 124 to 130 (NSFISST).

Belongs to the bacterial CoaD family. In terms of assembly, homohexamer. The cofactor is Mg(2+).

The protein resides in the cytoplasm. The catalysed reaction is (R)-4'-phosphopantetheine + ATP + H(+) = 3'-dephospho-CoA + diphosphate. The protein operates within cofactor biosynthesis; coenzyme A biosynthesis; CoA from (R)-pantothenate: step 4/5. Reversibly transfers an adenylyl group from ATP to 4'-phosphopantetheine, yielding dephospho-CoA (dPCoA) and pyrophosphate. This Shewanella baltica (strain OS155 / ATCC BAA-1091) protein is Phosphopantetheine adenylyltransferase.